The chain runs to 855 residues: Inactive rhomboid protein 1 (855 aa).

The tract at residues 1–36 (MSEARRDSTSSLQRKKPPWLKLDIPSAAPPAAEEPS) is disordered. Residues 1 to 411 (MSEARRDSTS…HRPFFTYWLT (411 aa)) lie on the Cytoplasmic side of the membrane. Positions 25-36 (PSAAPPAAEEPS) are enriched in low complexity. Residues Ser76 and Ser176 each carry the phosphoserine modification. A phosphothreonine mark is found at Thr180 and Thr183. At Ser390 the chain carries Phosphoserine. Residues 412–432 (FVHSLVTVLAVCIYGIAPVGF) traverse the membrane as a helical segment. The Lumenal segment spans residues 433 to 655 (SQHETVDSVL…NPEVPDQFYR (223 aa)). Asn583 carries an N-linked (GlcNAc...) asparagine glycan. A helical membrane pass occupies residues 656-676 (LWLSLFLHAGILHCLVSICFQ). At 677-691 (MTVLRDLEKLAGWHR) the chain is on the cytoplasmic side. A helical transmembrane segment spans residues 692–712 (IAIIYLLSGVTGNLASAIFLP). Topologically, residues 713–714 (YR) are lumenal. A helical membrane pass occupies residues 715 to 735 (AEVGPAGSQFGILACLFVELF). Topologically, residues 736–746 (QSWQILARPWR) are cytoplasmic. The helical transmembrane segment at 747-767 (AFFKLLAVVLFLFTFGLLPWI) threads the bilayer. Residues 768–772 (DNFAH) lie on the Lumenal side of the membrane. The helical transmembrane segment at 773-793 (ISGFISGLFLSFAFLPYISFG) threads the bilayer. Residues 794–803 (KFDLYRKRCQ) lie on the Cytoplasmic side of the membrane. Residues 804–824 (IIVFQVVFLGLLAGLVVLFYF) form a helical membrane-spanning segment. Over 825 to 855 (YPVRCEWCEFLTCIPFTDKFCEKYELDAQLH) the chain is Lumenal.

It belongs to the peptidase S54 family. In terms of assembly, homodimer, or homooligomer. Interacts with TGFA and HBEGF. Interacts with EGF; may retain EGF in the endoplasmic reticulum and regulates its degradation through the endoplasmic reticulum-associated degradation (ERAD). Interacts (via cytoplasmic N-terminus) with FRMD8/iTAP; this interaction leads to mutual protein stabilization. Interacts with ADAM17/TACE.

The protein resides in the endoplasmic reticulum membrane. The protein localises to the golgi apparatus membrane. Its function is as follows. Regulates ADAM17 protease, a sheddase of the epidermal growth factor (EGF) receptor ligands and TNF, thereby plays a role in sleep, cell survival, proliferation, migration and inflammation. Does not exhibit any protease activity on its own. This is Inactive rhomboid protein 1 (RHBDF1) from Plecturocebus moloch (Dusky titi monkey).